A 479-amino-acid chain; its full sequence is Ribulose bisphosphate carboxylase large chain (479 aa).

Positions 1–2 (MS) are excised as a propeptide. Residues Asn123 and Thr173 each coordinate substrate. Lys175 functions as the Proton acceptor in the catalytic mechanism. Position 177 (Lys177) interacts with substrate. Mg(2+) contacts are provided by Lys201, Asp203, and Glu204. An N6-carboxylysine modification is found at Lys201. Phosphoserine is present on Ser208. His294 (proton acceptor) is an active-site residue. Residues Arg295 and His327 each coordinate substrate. Position 330 is a phosphothreonine (Thr330). Residue Ser379 participates in substrate binding.

The protein belongs to the RuBisCO large chain family. Type I subfamily. In terms of assembly, heterohexadecamer of 8 large chains and 8 small chains; disulfide-linked. The disulfide link is formed within the large subunit homodimers. Requires Mg(2+) as cofactor. In terms of processing, the disulfide bond which can form in the large chain dimeric partners within the hexadecamer appears to be associated with oxidative stress and protein turnover.

The protein localises to the plastid. Its subcellular location is the chloroplast. It catalyses the reaction 2 (2R)-3-phosphoglycerate + 2 H(+) = D-ribulose 1,5-bisphosphate + CO2 + H2O. It carries out the reaction D-ribulose 1,5-bisphosphate + O2 = 2-phosphoglycolate + (2R)-3-phosphoglycerate + 2 H(+). RuBisCO catalyzes two reactions: the carboxylation of D-ribulose 1,5-bisphosphate, the primary event in carbon dioxide fixation, as well as the oxidative fragmentation of the pentose substrate in the photorespiration process. Both reactions occur simultaneously and in competition at the same active site. The polypeptide is Ribulose bisphosphate carboxylase large chain (Lobularia maritima (Sweet alyssum)).